A 203-amino-acid polypeptide reads, in one-letter code: Ras-related protein Rab-13 (203 aa).

GTP contacts are provided by Ser-17, Gly-18, Gly-20, Lys-21, Thr-22, Cys-23, and Thr-40. Mg(2+) is bound at residue Thr-22. Positions 31–45 (DNFNSTYISTIGIDF) match the Switch 1 motif. Thr-40 is a binding site for Mg(2+). Residues Lys-46 and Lys-58 each participate in a glycyl lysine isopeptide (Lys-Gly) (interchain with G-Cter in ubiquitin) cross-link. Asp-63 is a Mg(2+) binding site. Positions 63-80 (DTAGQERFKTITTAYYRG) match the Switch 2 motif. Gly-66, Asn-121, Lys-122, Asp-124, Ala-152, and Lys-153 together coordinate GTP. Residues 173-203 (TGGRRSGNSSKPSSTDLKVSDKKNSNKCSLG) form a disordered region. Residue Ser-178 is modified to Phosphoserine. Residues 178-189 (SGNSSKPSSTDL) are compositionally biased toward polar residues. A Cysteine methyl ester modification is found at Cys-200. A lipid anchor (S-geranylgeranyl cysteine) is attached at Cys-200. The propeptide at 201–203 (SLG) is removed in mature form.

Belongs to the small GTPase superfamily. Rab family. As to quaternary structure, interacts (GTP-bound form) with MICALL2; competes with RAB8A and is involved in tight junctions assembly. Interacts (GTP-bound form) with MICALL1. Interacts (GTP-bound form) with MICAL1, MICAL3, MICALCL, EHBP1 and EHBP1L1; ternary complexes of RAB8A, RAB13 and either MICAL1 or EHBP1L1 are possible. Interacts with PRKACA; downstream effector of RAB13 involved in tight junction assembly. Interacts with GRB2; may recruit RAB13 to the leading edge of migrating endothelial cells where it can activate RHOA. Interacts (isoprenylated form) with PDE6D; dissociates RAB13 from membranes. Interacts with BICDL2/BICDR2. Interacts with LEPROT and LEPROTL1. It depends on Mg(2+) as a cofactor. Ubiquitinated via 'Lys-11'-linked ubiquitination on Lys-46 and Lys-58; impairing the recruitment of guanosine diphosphate (GDP) dissociation inhibitor 1/GDI1. As to expression, highest levels found in lung, kidney, whole brain and spinal cord. Expressed in all tissues tested including Sertoli and germ cells (at protein level). Also detected in osteoclasts.

The protein localises to the cell membrane. Its subcellular location is the cytoplasmic vesicle membrane. It is found in the cell junction. It localises to the tight junction. The protein resides in the golgi apparatus. The protein localises to the trans-Golgi network membrane. Its subcellular location is the recycling endosome membrane. It is found in the cell projection. It localises to the lamellipodium. The enzyme catalyses GTP + H2O = GDP + phosphate + H(+). Its activity is regulated as follows. Regulated by guanine nucleotide exchange factors (GEFs) including DENND1C, which promote the exchange of bound GDP for free GTP. Regulated by GTPase activating proteins (GAPs) which increase the GTP hydrolysis activity. Inhibited by GDP dissociation inhibitors (GDIs). Activated in response to insulin. Functionally, the small GTPases Rab are key regulators of intracellular membrane trafficking, from the formation of transport vesicles to their fusion with membranes. Rabs cycle between an inactive GDP-bound form and an active GTP-bound form that is able to recruit to membranes different sets of downstream effectors directly responsible for vesicle formation, movement, tethering and fusion. RAB13 is involved in endocytic recycling and regulates the transport to the plasma membrane of transmembrane proteins like the tight junction protein OCLN/occludin. Thereby, it regulates the assembly and the activity of tight junctions. Moreover, it may also regulate tight junction assembly by activating the PKA signaling pathway and by reorganizing the actin cytoskeleton through the activation of the downstream effectors PRKACA and MICALL2 respectively. Through its role in tight junction assembly, may play a role in the establishment of Sertoli cell barrier. Plays also a role in angiogenesis through regulation of endothelial cells chemotaxis. Also involved in neurite outgrowth. Has also been proposed to play a role in post-Golgi membrane trafficking from the TGN to the recycling endosome. Finally, it has been involved in insulin-induced transport to the plasma membrane of the glucose transporter GLUT4 and therefore may play a role in glucose homeostasis. The polypeptide is Ras-related protein Rab-13 (Rattus norvegicus (Rat)).